A 170-amino-acid polypeptide reads, in one-letter code: Guided entry of tail-anchored proteins factor 1 (170 aa).

The Lumenal portion of the chain corresponds to 1 to 6; that stretch reads MAAGFN. The helical transmembrane segment at 7–27 threads the bilayer; the sequence is WFLVLSSVFLCNLVKTFLPSI. The Cytoplasmic segment spans residues 28–96; the sequence is SSFLSKIFHK…KSRTAQQAKM (69 aa). The tract at residues 35–93 is interaction with GET3/TRC40; it reads FHKDADQEMEMRTEIQNMKMELSTISMMDEFARYARLERKINKMTDQLKTLVKSRTAQQ. Residues 61–91 are a coiled coil; that stretch reads MMDEFARYARLERKINKMTDQLKTLVKSRTA. Residues 97–117 form a helical membrane-spanning segment; it reads KWIVNIAFYILQAALMISLIL. The Lumenal segment spans residues 118 to 137; sequence KYYADPVTVVPSKWIAPLER. A helical membrane pass occupies residues 138–158; that stretch reads LVAFPSGVAGGVGITCWLVVC. Topologically, residues 159–170 are cytoplasmic; that stretch reads NKVVALILQAVS.

Belongs to the WRB/GET1 family. Component of the Golgi to ER traffic (GET) complex, which is composed of GET1/WRB, CAMLG/GET2 and GET3/TRC40. Within the complex, GET1 and CAMLG form a heterotetramer which is stabilized by phosphatidylinositol binding and which binds to the GET3 homodimer.

Its subcellular location is the endoplasmic reticulum membrane. Functionally, required for the post-translational delivery of tail-anchored (TA) proteins to the endoplasmic reticulum (ER). Together with CAMLG/GET2, acts as a membrane receptor for soluble GET3/TRC40, which recognizes and selectively binds the transmembrane domain of TA proteins in the cytosol. Required to ensure correct topology and ER insertion of CAMLG. This Danio rerio (Zebrafish) protein is Guided entry of tail-anchored proteins factor 1.